The following is a 64-amino-acid chain: Large ribosomal subunit protein bL35 (64 aa).

The segment covering 1 to 10 (MPKMKTNSAA) has biased composition (polar residues). A disordered region spans residues 1-64 (MPKMKTNSAA…AKKLHQLLQK (64 aa)). Basic residues predominate over residues 54 to 64 (QAKKLHQLLQK).

This sequence belongs to the bacterial ribosomal protein bL35 family.

This Bifidobacterium longum (strain NCC 2705) protein is Large ribosomal subunit protein bL35.